A 190-amino-acid polypeptide reads, in one-letter code: Transcription antitermination protein NusB (190 aa).

Residues 158-190 are disordered; the sequence is AGTSEDHVPQREPAAGQLGQDDSNGGQVAAVCR.

It belongs to the NusB family.

Its function is as follows. Involved in transcription antitermination. Required for transcription of ribosomal RNA (rRNA) genes. Binds specifically to the boxA antiterminator sequence of the ribosomal RNA (rrn) operons. This is Transcription antitermination protein NusB from Mycobacterium leprae (strain TN).